The primary structure comprises 171 residues: 3-hydroxydecanoyl-[acyl-carrier-protein] dehydratase (171 aa).

Histidine 70 is a catalytic residue.

The protein belongs to the thioester dehydratase family. FabA subfamily. Homodimer.

The protein resides in the cytoplasm. The enzyme catalyses a (3R)-hydroxyacyl-[ACP] = a (2E)-enoyl-[ACP] + H2O. It carries out the reaction (3R)-hydroxydecanoyl-[ACP] = (2E)-decenoyl-[ACP] + H2O. It catalyses the reaction (2E)-decenoyl-[ACP] = (3Z)-decenoyl-[ACP]. It participates in lipid metabolism; fatty acid biosynthesis. In terms of biological role, necessary for the introduction of cis unsaturation into fatty acids. Catalyzes the dehydration of (3R)-3-hydroxydecanoyl-ACP to E-(2)-decenoyl-ACP and then its isomerization to Z-(3)-decenoyl-ACP. Can catalyze the dehydratase reaction for beta-hydroxyacyl-ACPs with saturated chain lengths up to 16:0, being most active on intermediate chain length. In Shewanella sediminis (strain HAW-EB3), this protein is 3-hydroxydecanoyl-[acyl-carrier-protein] dehydratase.